Consider the following 179-residue polypeptide: Acireductone dioxygenase (179 aa).

Histidine 100, histidine 102, glutamate 106, and histidine 145 together coordinate Fe(2+). Ni(2+) contacts are provided by histidine 100, histidine 102, glutamate 106, and histidine 145.

It belongs to the acireductone dioxygenase (ARD) family. As to quaternary structure, monomer. It depends on Fe(2+) as a cofactor. Requires Ni(2+) as cofactor.

It carries out the reaction 1,2-dihydroxy-5-(methylsulfanyl)pent-1-en-3-one + O2 = 3-(methylsulfanyl)propanoate + CO + formate + 2 H(+). The enzyme catalyses 1,2-dihydroxy-5-(methylsulfanyl)pent-1-en-3-one + O2 = 4-methylsulfanyl-2-oxobutanoate + formate + 2 H(+). Its pathway is amino-acid biosynthesis; L-methionine biosynthesis via salvage pathway; L-methionine from S-methyl-5-thio-alpha-D-ribose 1-phosphate: step 5/6. Functionally, catalyzes 2 different reactions between oxygen and the acireductone 1,2-dihydroxy-3-keto-5-methylthiopentene (DHK-MTPene) depending upon the metal bound in the active site. Fe-containing acireductone dioxygenase (Fe-ARD) produces formate and 2-keto-4-methylthiobutyrate (KMTB), the alpha-ketoacid precursor of methionine in the methionine recycle pathway. Ni-containing acireductone dioxygenase (Ni-ARD) produces methylthiopropionate, carbon monoxide and formate, and does not lie on the methionine recycle pathway. In Bacillus licheniformis (strain ATCC 14580 / DSM 13 / JCM 2505 / CCUG 7422 / NBRC 12200 / NCIMB 9375 / NCTC 10341 / NRRL NRS-1264 / Gibson 46), this protein is Acireductone dioxygenase.